The following is a 54-amino-acid chain: Ovomucoid (54 aa).

Residues 4–54 form the Kazal-like domain; it reads VDCSDYPKPVCSPENMPVCGSDSKTYSNKCDFCNAVADSNGTLTLSHFGKC. 3 disulfide bridges follow: cysteine 6–cysteine 36, cysteine 14–cysteine 33, and cysteine 22–cysteine 54. A glycan (N-linked (GlcNAc...) asparagine) is linked at asparagine 43.

The protein localises to the secreted. The polypeptide is Ovomucoid (Nycticorax nycticorax (Black-crowned night-heron)).